The sequence spans 145 residues: Copper transporter 4 (145 aa).

Transmembrane regions (helical) follow at residues 53-73 (GMYALALIFVFFLAFLAEWLA) and 106-126 (YLVILAVVSFNGGVFLAAIFG).

It belongs to the copper transporter (Ctr) (TC 1.A.56) family. SLC31A subfamily. In terms of tissue distribution, highly expressed in roots and at lower levels in leaves, stems and flowers.

It is found in the membrane. Its function is as follows. Involved in the transport of copper. In Arabidopsis thaliana (Mouse-ear cress), this protein is Copper transporter 4 (COPT4).